Reading from the N-terminus, the 938-residue chain is AP-2 complex subunit alpha-2 (938 aa).

Residues 11–12 (RG), lysine 43, tyrosine 53, and 57–61 (KYVCK) each bind a 1,2-diacyl-sn-glycero-3-phospho-(1D-myo-inositol-3,4,5-trisphosphate). Positions 616–677 (LKKKKGPSTV…APPVPAGPPP (62 aa)) are disordered. A compositionally biased stretch (low complexity) spans 645-668 (PALASTSAVSTPSPSADLLGLGAA).

This sequence belongs to the adaptor complexes large subunit family. As to quaternary structure, adaptor protein complex 2 (AP-2) is a heterotetramer composed of two large adaptins (alpha-type subunit AP2A1 or AP2A2 and beta-type subunit AP2B1), a medium adaptin (mu-type subunit AP2M1) and a small adaptin (sigma-type subunit AP2S1). Binds clathrin. Binds EPN1, EPS15, AMPH, SNAP91 and BIN1. Interacts with HIP1. Interacts with DGKD. Interacts with DENND1A, DENND1B and DENND1C. Interacts with FCHO1. Interacts with ATAT1; this interaction is required for efficient alpha-tubulin acetylation by ATAT1. Interacts with KIAA1107. Together with AP2B1 and AP2M1, it interacts with ADAM10; this interaction facilitates ADAM10 endocytosis from the plasma membrane during long-term potentiation in hippocampal neurons. Interacts with CLN3 (via dileucine motif). Interacts with ABCB11; this interaction regulates cell membrane expression of ABCB11 through its internalization in a clathrin-dependent manner and its subsequent degradation. Interacts with DNAJC6.

Its subcellular location is the cell membrane. It is found in the membrane. It localises to the coated pit. Its function is as follows. Component of the adaptor protein complex 2 (AP-2). Adaptor protein complexes function in protein transport via transport vesicles in different membrane traffic pathways. Adaptor protein complexes are vesicle coat components and appear to be involved in cargo selection and vesicle formation. AP-2 is involved in clathrin-dependent endocytosis in which cargo proteins are incorporated into vesicles surrounded by clathrin (clathrin-coated vesicles, CCVs) which are destined for fusion with the early endosome. The clathrin lattice serves as a mechanical scaffold but is itself unable to bind directly to membrane components. Clathrin-associated adaptor protein (AP) complexes which can bind directly to both the clathrin lattice and to the lipid and protein components of membranes are considered to be the major clathrin adaptors contributing the CCV formation. AP-2 also serves as a cargo receptor to selectively sort the membrane proteins involved in receptor-mediated endocytosis. AP-2 seems to play a role in the recycling of synaptic vesicle membranes from the presynaptic surface. AP-2 recognizes Y-X-X-[FILMV] (Y-X-X-Phi) and [ED]-X-X-X-L-[LI] endocytosis signal motifs within the cytosolic tails of transmembrane cargo molecules. AP-2 may also play a role in maintaining normal post-endocytic trafficking through the ARF6-regulated, non-clathrin pathway. During long-term potentiation in hippocampal neurons, AP-2 is responsible for the endocytosis of ADAM10. The AP-2 alpha subunit binds polyphosphoinositide-containing lipids, positioning AP-2 on the membrane. The AP-2 alpha subunit acts via its C-terminal appendage domain as a scaffolding platform for endocytic accessory proteins. The AP-2 alpha and AP-2 sigma subunits are thought to contribute to the recognition of the [ED]-X-X-X-L-[LI] motif. The chain is AP-2 complex subunit alpha-2 from Bos taurus (Bovine).